The following is a 159-amino-acid chain: uncharacterized protein (159 aa).

3 helical membrane-spanning segments follow: residues 17-37, 44-64, and 67-87; these read FFFF…NLSS, WLIV…PLPI, and FSGA…DLIA.

It is found in the membrane. This is an uncharacterized protein from Saccharomyces cerevisiae (strain ATCC 204508 / S288c) (Baker's yeast).